The chain runs to 208 residues: MARGQLYIISAPSGAGKTSLVSALLKEDKLAQVSISHTTRQVRPGEQDGVNYFFISREEFLAQAQAGDFLEHAEVFGNFYGTSQAWVESTLAKGVDVILEIDWQGAQQVRKLRPEAKSIFILPPSLEALQQRLESRGQDSAEVIQRRLQEAANEISHYPEYDYLVFNDDFDHALEELKSVFRAERLRLSVQQVRFEAELRGMLSSQSS.

A Guanylate kinase-like domain is found at 4–182 (GQLYIISAPS…ALEELKSVFR (179 aa)). 11-18 (APSGAGKT) is a binding site for ATP.

This sequence belongs to the guanylate kinase family.

It localises to the cytoplasm. The enzyme catalyses GMP + ATP = GDP + ADP. Its function is as follows. Essential for recycling GMP and indirectly, cGMP. This chain is Guanylate kinase, found in Hahella chejuensis (strain KCTC 2396).